A 336-amino-acid chain; its full sequence is Ketol-acid reductoisomerase (NADP(+)) (336 aa).

The KARI N-terminal Rossmann domain maps to 5–185 (SKIYTDKDSN…GATRAGVIPT (181 aa)). NADP(+) contacts are provided by residues 28–31 (YGSQ), S56, and 86–89 (DMVQ). H111 is a catalytic residue. G137 provides a ligand contact to NADP(+). The KARI C-terminal knotted domain occupies 186 to 331 (TFKEETETDL…NQLKDLIQKG (146 aa)). Mg(2+) is bound by residues D194, E198, E230, and E234. A substrate-binding site is contributed by S255.

This sequence belongs to the ketol-acid reductoisomerase family. Requires Mg(2+) as cofactor.

The catalysed reaction is (2R)-2,3-dihydroxy-3-methylbutanoate + NADP(+) = (2S)-2-acetolactate + NADPH + H(+). The enzyme catalyses (2R,3R)-2,3-dihydroxy-3-methylpentanoate + NADP(+) = (S)-2-ethyl-2-hydroxy-3-oxobutanoate + NADPH + H(+). It functions in the pathway amino-acid biosynthesis; L-isoleucine biosynthesis; L-isoleucine from 2-oxobutanoate: step 2/4. The protein operates within amino-acid biosynthesis; L-valine biosynthesis; L-valine from pyruvate: step 2/4. Involved in the biosynthesis of branched-chain amino acids (BCAA). Catalyzes an alkyl-migration followed by a ketol-acid reduction of (S)-2-acetolactate (S2AL) to yield (R)-2,3-dihydroxy-isovalerate. In the isomerase reaction, S2AL is rearranged via a Mg-dependent methyl migration to produce 3-hydroxy-3-methyl-2-ketobutyrate (HMKB). In the reductase reaction, this 2-ketoacid undergoes a metal-dependent reduction by NADPH to yield (R)-2,3-dihydroxy-isovalerate. The sequence is that of Ketol-acid reductoisomerase (NADP(+)) from Saccharolobus islandicus (strain Y.N.15.51 / Yellowstone #2) (Sulfolobus islandicus).